Reading from the N-terminus, the 69-residue chain is Beta-defensin 1 (69 aa).

The first 21 residues, 1-21, serve as a signal peptide directing secretion; sequence MKTHYFLLVMLFFLFSQMELG. A propeptide spanning residues 22-32 is cleaved from the precursor; sequence AGILTSLGRRT. 3 disulfides stabilise this stretch: cysteine 37–cysteine 66, cysteine 44–cysteine 59, and cysteine 49–cysteine 67.

It belongs to the beta-defensin family. Monomer. Homodimer. Highly expressed in kidney.

It localises to the secreted. The protein localises to the membrane. In terms of biological role, has bactericidal activity. May act as a ligand for C-C chemokine receptor CCR6. Positively regulates the sperm motility and bactericidal activity in a CCR6-dependent manner. Binds to CCR6 and triggers Ca2+ mobilization in the sperm which is important for its motility. The chain is Beta-defensin 1 (Defb1) from Rattus norvegicus (Rat).